Consider the following 826-residue polypeptide: Copper-transporting ATPase 1 (826 aa).

HMA domains are found at residues 15 to 80 and 82 to 147; these read APTD…YEPK and IIQE…YDVR. The Cu cation site is built by Cys-26, Cys-29, Cys-93, and Cys-96. 6 helical membrane-spanning segments follow: residues 172-192, 209-229, 246-266, 270-290, 429-449, and 457-477; these read LVIL…GSHF, NLYI…LRFF, LVVL…FASG, SGTA…ILLG, AWFV…WYVF, and FALV…MGLA. Asp-514 (4-aspartylphosphate intermediate) is an active-site residue. Mg(2+) contacts are provided by Asp-713 and Asp-717. A run of 2 helical transmembrane segments spans residues 772–792 and 795–815; these read FWAF…LYPL and TLLS…FVLG.

The protein belongs to the cation transport ATPase (P-type) (TC 3.A.3) family. Type IB subfamily.

The protein localises to the cell membrane. It catalyses the reaction Cu(2+)(in) + ATP + H2O = Cu(2+)(out) + ADP + phosphate + H(+). Involved in copper transport. The sequence is that of Copper-transporting ATPase 1 (actP1) from Rhizobium meliloti (strain 1021) (Ensifer meliloti).